The primary structure comprises 674 residues: DNA ligase (674 aa).

Residues Asp-34–Asp-38, Ser-84–Leu-85, and Glu-116 each bind NAD(+). Residue Lys-118 is the N6-AMP-lysine intermediate of the active site. NAD(+) is bound by residues Arg-139, Glu-174, Lys-291, and Lys-315. Positions 409, 412, 425, and 430 each coordinate Zn(2+). The BRCT domain occupies Arg-586 to Ser-674.

It belongs to the NAD-dependent DNA ligase family. LigA subfamily. Requires Mg(2+) as cofactor. Mn(2+) serves as cofactor.

It carries out the reaction NAD(+) + (deoxyribonucleotide)n-3'-hydroxyl + 5'-phospho-(deoxyribonucleotide)m = (deoxyribonucleotide)n+m + AMP + beta-nicotinamide D-nucleotide.. Its function is as follows. DNA ligase that catalyzes the formation of phosphodiester linkages between 5'-phosphoryl and 3'-hydroxyl groups in double-stranded DNA using NAD as a coenzyme and as the energy source for the reaction. It is essential for DNA replication and repair of damaged DNA. The sequence is that of DNA ligase from Thermus scotoductus.